A 111-amino-acid polypeptide reads, in one-letter code: Putative protein YddJ (111 aa).

This chain is Putative protein YddJ (yddJ), found in Escherichia coli (strain K12).